We begin with the raw amino-acid sequence, 1620 residues long: Probable serine/threonine-protein kinase gdt4 (1620 aa).

Residues 1–19 form the signal peptide; it reads MKLEQRIFFLICLVINSFS. Over 20–891 the chain is Extracellular; sequence NCSLLVAPDG…EVIGINEQLN (872 aa). The helical transmembrane segment at 892-912 threads the bilayer; that stretch reads ILAIVLPITISLFAAASILAG. The Cytoplasmic portion of the chain corresponds to 913-1620; that stretch reads YLVIKKYKKP…AKRNKKNQNQ (708 aa). The region spanning 1349–1604 is the Protein kinase domain; sequence IVLEKYLSEG…TLIDLLEKLL (256 aa). Residues 1355 to 1363 and lysine 1376 each bind ATP; that span reads LSEGSFGVV. Aspartate 1466 (proton acceptor) is an active-site residue.

In the N-terminal section; belongs to the GDT family. It in the C-terminal section; belongs to the protein kinase superfamily. TKL Ser/Thr protein kinase family.

Its subcellular location is the membrane. The enzyme catalyses L-seryl-[protein] + ATP = O-phospho-L-seryl-[protein] + ADP + H(+). It carries out the reaction L-threonyl-[protein] + ATP = O-phospho-L-threonyl-[protein] + ADP + H(+). In Dictyostelium discoideum (Social amoeba), this protein is Probable serine/threonine-protein kinase gdt4 (gdt4).